The primary structure comprises 107 residues: MENTFKLLFETIGERKRNPLPESYTNYLFSKGEDKILKKIGEECTEVIIASKNNDKEELVKEMVDVLYHCFVLLAEKNISLEDIMAEVTERNGKLSRVGDRREIDTL.

It belongs to the PRA-PH family.

It is found in the cytoplasm. The enzyme catalyses 1-(5-phospho-beta-D-ribosyl)-ATP + H2O = 1-(5-phospho-beta-D-ribosyl)-5'-AMP + diphosphate + H(+). The protein operates within amino-acid biosynthesis; L-histidine biosynthesis; L-histidine from 5-phospho-alpha-D-ribose 1-diphosphate: step 2/9. This chain is Phosphoribosyl-ATP pyrophosphatase, found in Bacillus thuringiensis (strain Al Hakam).